The sequence spans 553 residues: Putative transport protein YidE (553 aa).

5 consecutive transmembrane segments (helical) span residues 4–24 (IALTVSILALVAVVGLFIGNV), 28–48 (GVGLGIGGVLFGGIIVGHFVS), 65–85 (FGLILFVYTIGIQVGPGFFAS), 95–115 (LFAVLIVIIGGLVTAILHKLF), and 158–178 (MSYAMAYPFGICGILFTMWML). RCK C-terminal domains follow at residues 191–276 (QQHE…VIGQ) and 279–361 (DTSL…VLGN). The next 6 helical transmembrane spans lie at 371–391 (MLPVFIGIGLGVLLGSIPVFV), 393–413 (GFPAALKLGLAGGPLIMALIL), 439–459 (IVLFLSVVGLKSGGDFIHTLV), 464–484 (LSWIGYGALITAVPLITVGIL), 493–513 (YLTMCGMLAGSMTDPPALAFA), and 533–553 (LVMFLRIITPQLLAVLFWSIG).

Belongs to the AAE transporter (TC 2.A.81) family. YidE subfamily.

Its subcellular location is the cell membrane. The polypeptide is Putative transport protein YidE (Escherichia coli O127:H6 (strain E2348/69 / EPEC)).